Here is a 150-residue protein sequence, read N- to C-terminus: UPF0178 protein PC1_0756 (150 aa).

The protein belongs to the UPF0178 family.

The protein is UPF0178 protein PC1_0756 of Pectobacterium carotovorum subsp. carotovorum (strain PC1).